The chain runs to 451 residues: Bifunctional protein GlmU (451 aa).

The tract at residues 1 to 229 (MQRHAIVLAA…FEEIMGVNDR (229 aa)) is pyrophosphorylase. Residues 8–11 (LAAG), lysine 22, glutamine 72, and 77–78 (GT) contribute to the UDP-N-acetyl-alpha-D-glucosamine site. Aspartate 102 lines the Mg(2+) pocket. Positions 139, 154, and 227 each coordinate UDP-N-acetyl-alpha-D-glucosamine. Asparagine 227 contacts Mg(2+). The linker stretch occupies residues 230-250 (VMLSEAEKAFRKRINEQHMKN). The interval 251–451 (GVTIIDPVTT…QTTKEGYLKK (201 aa)) is N-acetyltransferase. 2 residues coordinate UDP-N-acetyl-alpha-D-glucosamine: arginine 332 and lysine 350. Residue histidine 362 is the Proton acceptor of the active site. UDP-N-acetyl-alpha-D-glucosamine is bound by residues tyrosine 365 and asparagine 376. Acetyl-CoA-binding positions include 385 to 386 (NY), alanine 422, and arginine 439.

It in the N-terminal section; belongs to the N-acetylglucosamine-1-phosphate uridyltransferase family. This sequence in the C-terminal section; belongs to the transferase hexapeptide repeat family. As to quaternary structure, homotrimer. Mg(2+) is required as a cofactor.

It is found in the cytoplasm. The enzyme catalyses alpha-D-glucosamine 1-phosphate + acetyl-CoA = N-acetyl-alpha-D-glucosamine 1-phosphate + CoA + H(+). It carries out the reaction N-acetyl-alpha-D-glucosamine 1-phosphate + UTP + H(+) = UDP-N-acetyl-alpha-D-glucosamine + diphosphate. Its pathway is nucleotide-sugar biosynthesis; UDP-N-acetyl-alpha-D-glucosamine biosynthesis; N-acetyl-alpha-D-glucosamine 1-phosphate from alpha-D-glucosamine 6-phosphate (route II): step 2/2. It participates in nucleotide-sugar biosynthesis; UDP-N-acetyl-alpha-D-glucosamine biosynthesis; UDP-N-acetyl-alpha-D-glucosamine from N-acetyl-alpha-D-glucosamine 1-phosphate: step 1/1. It functions in the pathway bacterial outer membrane biogenesis; LPS lipid A biosynthesis. Catalyzes the last two sequential reactions in the de novo biosynthetic pathway for UDP-N-acetylglucosamine (UDP-GlcNAc). The C-terminal domain catalyzes the transfer of acetyl group from acetyl coenzyme A to glucosamine-1-phosphate (GlcN-1-P) to produce N-acetylglucosamine-1-phosphate (GlcNAc-1-P), which is converted into UDP-GlcNAc by the transfer of uridine 5-monophosphate (from uridine 5-triphosphate), a reaction catalyzed by the N-terminal domain. In Staphylococcus saprophyticus subsp. saprophyticus (strain ATCC 15305 / DSM 20229 / NCIMB 8711 / NCTC 7292 / S-41), this protein is Bifunctional protein GlmU.